The sequence spans 310 residues: ER-derived vesicles protein ERV29 (310 aa).

The Cytoplasmic portion of the chain corresponds to Met1–Tyr108. A disordered region spans residues Gly11–Asn31. The chain crosses the membrane as a helical span at residues Phe109 to Leu129. Residues Val130 to Tyr137 are Lumenal-facing. Residues Ala138–Gly158 form a helical membrane-spanning segment. At Ser159 to Arg209 the chain is on the cytoplasmic side. The chain crosses the membrane as a helical span at residues Ile210–Leu230. Residues Thr231–Lys245 are Lumenal-facing. The chain crosses the membrane as a helical span at residues Phe246 to Trp266. Over Phe267–Tyr310 the chain is Cytoplasmic. The short motif at Lys307–Tyr310 is the Di-lysine motif element.

The protein belongs to the SURF4 family.

The protein resides in the endoplasmic reticulum membrane. Functionally, constituent of COPII-coated endoplasmic reticulum-derived transport vesicles. Required for efficient transport of a subset of secretory proteins to the Golgi. The C-terminal di-lysine motif is required for exit from the endoplasmic reticulum. Required directly for packaging glycosylated pro-alpha-factor into COPII vesicles. Facilitates retrograde transport from the Golgi to the endoplasmic reticulum. This Saccharomyces cerevisiae (strain ATCC 204508 / S288c) (Baker's yeast) protein is ER-derived vesicles protein ERV29 (ERV29).